The primary structure comprises 216 residues: NADH-quinone oxidoreductase subunit C (216 aa).

It belongs to the complex I 30 kDa subunit family. As to quaternary structure, NDH-1 is composed of 14 different subunits. Subunits NuoB, C, D, E, F, and G constitute the peripheral sector of the complex.

It is found in the cell inner membrane. It carries out the reaction a quinone + NADH + 5 H(+)(in) = a quinol + NAD(+) + 4 H(+)(out). NDH-1 shuttles electrons from NADH, via FMN and iron-sulfur (Fe-S) centers, to quinones in the respiratory chain. The immediate electron acceptor for the enzyme in this species is believed to be ubiquinone. Couples the redox reaction to proton translocation (for every two electrons transferred, four hydrogen ions are translocated across the cytoplasmic membrane), and thus conserves the redox energy in a proton gradient. The sequence is that of NADH-quinone oxidoreductase subunit C from Francisella tularensis subsp. holarctica (strain FTNF002-00 / FTA).